Here is a 359-residue protein sequence, read N- to C-terminus: Histidinol-phosphate aminotransferase (359 aa).

Lysine 217 bears the N6-(pyridoxal phosphate)lysine mark.

This sequence belongs to the class-II pyridoxal-phosphate-dependent aminotransferase family. Histidinol-phosphate aminotransferase subfamily. Homodimer. Pyridoxal 5'-phosphate serves as cofactor.

The enzyme catalyses L-histidinol phosphate + 2-oxoglutarate = 3-(imidazol-4-yl)-2-oxopropyl phosphate + L-glutamate. It participates in amino-acid biosynthesis; L-histidine biosynthesis; L-histidine from 5-phospho-alpha-D-ribose 1-diphosphate: step 7/9. This is Histidinol-phosphate aminotransferase from Salmonella choleraesuis (strain SC-B67).